The primary structure comprises 283 residues: Phosphatidylserine decarboxylase proenzyme (283 aa).

Residues Asp-96, His-152, and Ser-250 each act as charge relay system; for autoendoproteolytic cleavage activity in the active site. Residue Ser-250 is the Schiff-base intermediate with substrate; via pyruvic acid; for decarboxylase activity of the active site. Ser-250 is subject to Pyruvic acid (Ser); by autocatalysis.

It belongs to the phosphatidylserine decarboxylase family. PSD-B subfamily. Prokaryotic type I sub-subfamily. In terms of assembly, heterodimer of a large membrane-associated beta subunit and a small pyruvoyl-containing alpha subunit. Pyruvate serves as cofactor. Post-translationally, is synthesized initially as an inactive proenzyme. Formation of the active enzyme involves a self-maturation process in which the active site pyruvoyl group is generated from an internal serine residue via an autocatalytic post-translational modification. Two non-identical subunits are generated from the proenzyme in this reaction, and the pyruvate is formed at the N-terminus of the alpha chain, which is derived from the carboxyl end of the proenzyme. The autoendoproteolytic cleavage occurs by a canonical serine protease mechanism, in which the side chain hydroxyl group of the serine supplies its oxygen atom to form the C-terminus of the beta chain, while the remainder of the serine residue undergoes an oxidative deamination to produce ammonia and the pyruvoyl prosthetic group on the alpha chain. During this reaction, the Ser that is part of the protease active site of the proenzyme becomes the pyruvoyl prosthetic group, which constitutes an essential element of the active site of the mature decarboxylase.

The protein resides in the cell membrane. It catalyses the reaction a 1,2-diacyl-sn-glycero-3-phospho-L-serine + H(+) = a 1,2-diacyl-sn-glycero-3-phosphoethanolamine + CO2. It functions in the pathway phospholipid metabolism; phosphatidylethanolamine biosynthesis; phosphatidylethanolamine from CDP-diacylglycerol: step 2/2. Catalyzes the formation of phosphatidylethanolamine (PtdEtn) from phosphatidylserine (PtdSer). The chain is Phosphatidylserine decarboxylase proenzyme from Acinetobacter baumannii (strain ATCC 17978 / DSM 105126 / CIP 53.77 / LMG 1025 / NCDC KC755 / 5377).